The primary structure comprises 1142 residues: MLVLRCRLGTSFPKLDNLVPKGKMKILLVFLGLLGNSVAMPMHMPRMPGFSSKSEEMMRYNQFNFMNGPHMAHLGPFFGNGLPQQFPQYQMPMWPQPPPNTWHPRKSSAPKRHNKTDQTQETQKPNQTQSKKPPQKRPLKQPSHNQPQPEEEAQPPQAFPPFGNGLFPYQQPPWQIPQRLPPPGYGRPPISNEEGGNPYFGYFGYHGFGGRPPYYSEEMFEQDFEKPKEEDPPKAESPGTEPTANSTVTETNSTQPNPKGSQGGNDTSPTGNSTPGLNTGNNPPAQNGIGPLPAVNASGQGGPGSQIPWRPSQPNIRENHPYPNIRNFPSGRQWYFTGTVMGHRQNRPFYRNQQVQRGPRWNFFAWERKQVARPGNPVYHKAYPPTSRGNYPNYAGNPANLRRKPQGPNKHPVGTTVAPLGPKPGPVVRNEKIQNPKEKPLGPKEQIIVPTKNPTSPWRNSQQYEVNKSNYKLPHSEGYMPVPNFNSVDQHENSYYPRGDSRKVPNSDGQTQSQNLPKGIVLGSRRMPYESETNQSELKHSSYQPAVYPEEIPSPAKEHFPAGRNTWDHQEISPPFKEDPGRQEEHLPHPSHGSRGSVFYPEYNPYDPRENSPYLRGNTWDERDDSPNTMGQKESPLYPINTPDQKEIVPYNEEDPVDPTGDEVFPGQNRWGEELSFKGGPTVRHYEGEQYTSNQPKEYLPYSLDNPSKPREDFYYSEFYPWSPDENFPSYNTASTMPPPIESRGYYVNNAAGPEESTLFPSRNSWDHRIQAQGQRERRPYFNRNIWDQATHLQKAPARPPDQKGNQPYYSNTPAGLQKNPIWHEGENLNYGMQITRMNSPEREHSSFPNFIPPSYPSGQKEAHLFHLSQRGSCCAGSSTGPKDNPLALQDYTPSYGLAPGENQDTSPLYTDGSHTKQTRDIISPTSILPGQRNSSEKRESQNPFRDDVSTLRRNTPCSIKNQLGQKEIMPFPEASSLQSKNTPCLKNDLGGDGNNILEQVFEDNQLNERTVDLTPEQLVIGTPDEGSNPEGIQSQVQENESERQQQRPSNILHLPCFGSKLAKHHSSTTGTPSSDGRQSPFDGDSITPTENPNTLVELATEEQFKSINVDPLDADEHSPFEFLQRGTNVQDQVQDCLLLQA.

The signal sequence occupies residues 1-39 (MLVLRCRLGTSFPKLDNLVPKGKMKILLVFLGLLGNSVA). Disordered stretches follow at residues 88–193 (QYQM…ISNE), 214–326 (YYSE…PNIR), 398–671 (PANL…QNRW), 874–955 (CCAG…LRRN), 1020–1048 (VIGTPDEGSNPEGIQSQVQENESERQQQR), and 1062–1092 (LAKHHSSTTGTPSSDGRQSPFDGDSITPTEN). Residues 103 to 114 (HPRKSSAPKRHN) are compositionally biased toward basic residues. N-linked (GlcNAc...) asparagine glycans are attached at residues Asn-114 and Asn-126. Positions 117 to 128 (DQTQETQKPNQT) are enriched in polar residues. Low complexity predominate over residues 140–162 (KQPSHNQPQPEEEAQPPQAFPPF). The span at 170–186 (QQPPWQIPQRLPPPGYG) shows a compositional bias: pro residues. Phosphoserine is present on residues Ser-191 and Ser-216. Residues 223 to 234 (DFEKPKEEDPPK) show a composition bias toward basic and acidic residues. Over residues 240–285 (TEPTANSTVTETNSTQPNPKGSQGGNDTSPTGNSTPGLNTGNNPPA) the composition is skewed to polar residues. N-linked (GlcNAc...) asparagine glycosylation is found at Asn-245, Asn-252, Asn-265, and Asn-296. A compositionally biased stretch (basic and acidic residues) spans 429 to 442 (RNEKIQNPKEKPLG). Composition is skewed to polar residues over residues 452–470 (KNPTSPWRNSQQYEVNKSN), 507–516 (SDGQTQSQNL), and 531–544 (SETNQSELKHSSYQ). A glycan (N-linked (GlcNAc...) asparagine) is linked at Asn-467. Asn-534 carries an N-linked (GlcNAc...) asparagine glycan. Basic and acidic residues predominate over residues 556–588 (AKEHFPAGRNTWDHQEISPPFKEDPGRQEEHLP). Residues 652-661 (NEEDPVDPTG) are compositionally biased toward acidic residues. Residues 924–934 (SPTSILPGQRN) show a composition bias toward polar residues. N-linked (GlcNAc...) asparagine glycosylation is present at Asn-934. A compositionally biased stretch (basic and acidic residues) spans 935–951 (SSEKRESQNPFRDDVST). N-linked (GlcNAc...) asparagine glycosylation is present at Asn-1040. Residues 1068 to 1078 (STTGTPSSDGR) are compositionally biased toward polar residues.

Post-translationally, phosphorylated by FAM20C in vitro. As to expression, expressed in tooth particularly in odontoblast, ameloblast and cementoblast.

The protein resides in the secreted. The protein localises to the extracellular space. Its subcellular location is the extracellular matrix. In terms of biological role, involved in the mineralization and structural organization of enamel. Involved in the extension of enamel during the secretory stage of dental enamel formation. In Homo sapiens (Human), this protein is Enamelin (ENAM).